A 1289-amino-acid chain; its full sequence is uncharacterized protein (1289 aa).

Residues 615-733 (LDMYDVLKEL…DGMLSYSAQL (119 aa)) enclose the MHD1 domain. Residues 745 to 774 (DEPSYSLESSDTRSSLSLNNANVNHEKSRS) form a disordered region. The segment covering 748 to 762 (SYSLESSDTRSSLSL) has biased composition (low complexity). Residues 834–966 (AQYHSSHNLE…DDGFPIDFSL (133 aa)) form the C2 domain. The region spanning 1044 to 1184 (YDAILPLFDY…KSVSELKDEV (141 aa)) is the MHD2 domain.

It localises to the cytoplasm. This is an uncharacterized protein from Saccharomyces cerevisiae (strain ATCC 204508 / S288c) (Baker's yeast).